The chain runs to 43 residues: Protein PsbN (43 aa).

The chain crosses the membrane as a helical span at residues 7–27 (LSIAIGSILLVITGFAIYTAF).

This sequence belongs to the PsbN family.

It is found in the cellular thylakoid membrane. May play a role in photosystem I and II biogenesis. This is Protein PsbN from Crocosphaera subtropica (strain ATCC 51142 / BH68) (Cyanothece sp. (strain ATCC 51142)).